Here is a 109-residue protein sequence, read N- to C-terminus: Probable cytochrome b-c1 complex subunit 7 (109 aa).

It belongs to the UQCRB/QCR7 family. As to quaternary structure, component of the ubiquinol-cytochrome c oxidoreductase (cytochrome b-c1 complex, complex III, CIII), a multisubunit enzyme composed of 3 respiratory subunits cytochrome b, cytochrome c1 and Rieske protein, 2 core protein subunits, and additional low-molecular weight protein subunits. The complex exists as an obligatory dimer and forms supercomplexes (SCs) in the inner mitochondrial membrane with cytochrome c oxidase (complex IV, CIV).

It is found in the mitochondrion inner membrane. Functionally, component of the ubiquinol-cytochrome c oxidoreductase, a multisubunit transmembrane complex that is part of the mitochondrial electron transport chain which drives oxidative phosphorylation. The respiratory chain contains 3 multisubunit complexes succinate dehydrogenase (complex II, CII), ubiquinol-cytochrome c oxidoreductase (cytochrome b-c1 complex, complex III, CIII) and cytochrome c oxidase (complex IV, CIV), that cooperate to transfer electrons derived from NADH and succinate to molecular oxygen, creating an electrochemical gradient over the inner membrane that drives transmembrane transport and the ATP synthase. The cytochrome b-c1 complex catalyzes electron transfer from ubiquinol to cytochrome c, linking this redox reaction to translocation of protons across the mitochondrial inner membrane, with protons being carried across the membrane as hydrogens on the quinol. In the process called Q cycle, 2 protons are consumed from the matrix, 4 protons are released into the intermembrane space and 2 electrons are passed to cytochrome c. The sequence is that of Probable cytochrome b-c1 complex subunit 7 from Dictyostelium discoideum (Social amoeba).